The following is a 142-amino-acid chain: Photosystem II extrinsic protein U (142 aa).

The first 29 residues, 1–29 (MKGLVRLLTVFSLLLGCWGWLGTTQIAQA), serve as a signal peptide directing secretion.

It belongs to the PsbU family. As to quaternary structure, PSII is composed of 1 copy each of membrane proteins PsbA, PsbB, PsbC, PsbD, PsbE, PsbF, PsbH, PsbI, PsbJ, PsbK, PsbL, PsbM, PsbT, PsbX, PsbY, PsbZ, Psb30/Ycf12, peripheral proteins PsbO, CyanoQ (PsbQ), PsbU, PsbV and a large number of cofactors. It forms dimeric complexes.

It is found in the cellular thylakoid membrane. In terms of biological role, one of the extrinsic, lumenal subunits of photosystem II (PSII). PSII is a light-driven water plastoquinone oxidoreductase, using light energy to abstract electrons from H(2)O, generating a proton gradient subsequently used for ATP formation. The extrinsic proteins stabilize the structure of photosystem II oxygen-evolving complex (OEC), the ion environment of oxygen evolution and protect the OEC against heat-induced inactivation. This is Photosystem II extrinsic protein U from Nostoc sp. (strain PCC 7120 / SAG 25.82 / UTEX 2576).